Reading from the N-terminus, the 108-residue chain is Phosphoribosyl-ATP pyrophosphatase (108 aa).

Residues 88 to 108 (VENELDRREGRSGIEEKASRK) are disordered. Residues 91-108 (ELDRREGRSGIEEKASRK) show a composition bias toward basic and acidic residues.

It belongs to the PRA-PH family.

It localises to the cytoplasm. It catalyses the reaction 1-(5-phospho-beta-D-ribosyl)-ATP + H2O = 1-(5-phospho-beta-D-ribosyl)-5'-AMP + diphosphate + H(+). The protein operates within amino-acid biosynthesis; L-histidine biosynthesis; L-histidine from 5-phospho-alpha-D-ribose 1-diphosphate: step 2/9. The polypeptide is Phosphoribosyl-ATP pyrophosphatase (Paracoccus denitrificans (strain Pd 1222)).